Here is a 459-residue protein sequence, read N- to C-terminus: Interleukin-7 receptor subunit alpha (459 aa).

The signal sequence occupies residues 1 to 20 (MMALGRAFAIVFCLIQAVSG). Residues 21–239 (ESGNAQDGDL…PEPKNQGGWD (219 aa)) are Extracellular-facing. Cysteine 42 and cysteine 57 form a disulfide bridge. The N-linked (GlcNAc...) asparagine glycan is linked to asparagine 60. 2 disulfide bridges follow: cysteine 74-cysteine 82 and cysteine 108-cysteine 118. Residues asparagine 115 and asparagine 177 are each glycosylated (N-linked (GlcNAc...) asparagine). The region spanning 131–232 (APSDLKVVYR…PSSTFETPEP (102 aa)) is the Fibronectin type-III domain. Positions 218–222 (WSEWS) match the WSXWS motif motif. Residues 240-264 (PVLPSVTILSLFSVFLLVILAHVLW) form a helical membrane-spanning segment. Topologically, residues 265–459 (KKRIKPVVWP…VTMSSFYQNK (195 aa)) are cytoplasmic. The Box 1 motif signature appears at 272-280 (VWPSLPDHK). Position 282 is a phosphothreonine; by PKC (threonine 282). 2 disordered regions span residues 337-365 (TQGH…RRES) and 378-413 (NAPP…NTNV). Residues 347–357 (ANRSPETSVSP) show a composition bias toward polar residues. Over residues 388 to 397 (PDYRDGDRNR) the composition is skewed to basic and acidic residues.

It belongs to the type I cytokine receptor family. Type 4 subfamily. As to quaternary structure, the IL7 receptor is a heterodimer of IL7R and IL2RG. The TSLP receptor is a heterodimer of CRLF2 and IL7R. Interacts with CD53. Post-translationally, N-glycosylated IL-7Ralpha binds IL7 300-fold more tightly than the unglycosylated form. In terms of processing, ubiquitinated by MARCHF8; leading to lysosomal degradation. In terms of tissue distribution, spleen, thymus and fetal liver.

The protein resides in the membrane. In terms of biological role, receptor for interleukin-7. Also acts as a receptor for thymic stromal lymphopoietin (TSLP). This Mus musculus (Mouse) protein is Interleukin-7 receptor subunit alpha (Il7r).